The primary structure comprises 173 residues: NADH-ubiquinone oxidoreductase chain 6 (173 aa).

5 consecutive transmembrane segments (helical) span residues 1 to 21 (MAYI…SVAS), 25 to 45 (PYFA…VLMG), 53 to 73 (LVLF…CAAL), 87 to 107 (VLGS…WFWG), and 139 to 159 (LGGG…LVVL).

This sequence belongs to the complex I subunit 6 family.

Its subcellular location is the mitochondrion membrane. It catalyses the reaction a ubiquinone + NADH + 5 H(+)(in) = a ubiquinol + NAD(+) + 4 H(+)(out). Functionally, core subunit of the mitochondrial membrane respiratory chain NADH dehydrogenase (Complex I) that is believed to belong to the minimal assembly required for catalysis. Complex I functions in the transfer of electrons from NADH to the respiratory chain. The immediate electron acceptor for the enzyme is believed to be ubiquinone. The protein is NADH-ubiquinone oxidoreductase chain 6 (MT-ND6) of Gadus morhua (Atlantic cod).